We begin with the raw amino-acid sequence, 275 residues long: Uroporphyrinogen-III synthase (275 aa).

The protein belongs to the uroporphyrinogen-III synthase family.

It catalyses the reaction hydroxymethylbilane = uroporphyrinogen III + H2O. It functions in the pathway porphyrin-containing compound metabolism; protoporphyrin-IX biosynthesis; coproporphyrinogen-III from 5-aminolevulinate: step 3/4. Functionally, catalyzes cyclization of the linear tetrapyrrole, hydroxymethylbilane, to the macrocyclic uroporphyrinogen III, the fourth step in the heme biosynthetic pathway. This Saccharomyces cerevisiae (strain ATCC 204508 / S288c) (Baker's yeast) protein is Uroporphyrinogen-III synthase.